The sequence spans 364 residues: Spermidine/putrescine import ATP-binding protein PotA (364 aa).

The ABC transporter domain occupies 5 to 235 (LSFKDVSKGF…PVNRFVADFI (231 aa)). ATP is bound at residue 37-44 (GPSGCGKT).

It belongs to the ABC transporter superfamily. Spermidine/putrescine importer (TC 3.A.1.11.1) family. As to quaternary structure, the complex is composed of two ATP-binding proteins (PotA), two transmembrane proteins (PotB and PotC) and a solute-binding protein (PotD).

The protein resides in the cell membrane. It carries out the reaction ATP + H2O + polyamine-[polyamine-binding protein]Side 1 = ADP + phosphate + polyamineSide 2 + [polyamine-binding protein]Side 1.. In terms of biological role, part of the ABC transporter complex PotABCD involved in spermidine/putrescine import. Responsible for energy coupling to the transport system. This chain is Spermidine/putrescine import ATP-binding protein PotA, found in Staphylococcus epidermidis (strain ATCC 35984 / DSM 28319 / BCRC 17069 / CCUG 31568 / BM 3577 / RP62A).